Consider the following 502-residue polypeptide: Phenylalanine--tRNA ligase alpha subunit (502 aa).

L-phenylalanine-binding positions include threonine 339, 382 to 384 (QIE), and tyrosine 422. Glutamate 424 contributes to the Mg(2+) binding site. Phenylalanine 448 provides a ligand contact to L-phenylalanine.

This sequence belongs to the class-II aminoacyl-tRNA synthetase family. Phe-tRNA synthetase alpha subunit type 2 subfamily. In terms of assembly, tetramer of two alpha and two beta subunits. It depends on Mg(2+) as a cofactor.

The protein localises to the cytoplasm. The catalysed reaction is tRNA(Phe) + L-phenylalanine + ATP = L-phenylalanyl-tRNA(Phe) + AMP + diphosphate + H(+). This chain is Phenylalanine--tRNA ligase alpha subunit, found in Halobacterium salinarum (strain ATCC 29341 / DSM 671 / R1).